A 349-amino-acid chain; its full sequence is Estrogen receptor (349 aa).

The nuclear receptor DNA-binding region spans 1 to 5 (YEVGM). Residues 1 to 38 (YEVGMMKGGIRKDRRGGRMLKHKRQREENDSRNAGALT) are disordered. A compositionally biased stretch (basic residues) spans 12 to 24 (KDRRGGRMLKHKR). Residues 65–301 (TADQMVSALL…DLLLEMLDAH (237 aa)) form the NR LBD domain. The disordered stretch occupies residues 306-327 (PAAKGSPPSEDDPLNQLAVPSP).

The protein belongs to the nuclear hormone receptor family. NR3 subfamily. Binds DNA as a homodimer. Can form a heterodimer with ER-beta.

The protein resides in the nucleus. Functionally, the steroid hormones and their receptors are involved in the regulation of eukaryotic gene expression and affect cellular proliferation and differentiation in target tissues. The sequence is that of Estrogen receptor (ESR1) from Anolis carolinensis (Green anole).